Reading from the N-terminus, the 4555-residue chain is Protocadherin Fat 3 (4555 aa).

Residues 1–31 form the signal peptide; that stretch reads MGVTMRHCIDTRPPSCLIFLLLKLCATVSQG. At 32-4153 the chain is on the extracellular side; that stretch reads LPGTGPLGFH…AGHSYVGKEE (4122 aa). Cadherin domains lie at 43-157, 158-265, 263-374, 376-471, 472-577, 578-680, 726-830, 831-935, 936-1042, 1043-1147, 1148-1253, 1254-1358, 1362-1459, 1460-1565, 1566-1768, 1769-1882, 1883-1985, 1982-2083, 2084-2185, 2186-2286, 2287-2393, 2394-2495, 2496-2599, 2600-2707, 2708-2813, 2814-2923, 2924-3028, 3029-3130, 3131-3235, 3236-3340, 3341-3445, 3446-3550, and 3551-3652; these read THAL…RPLF, SPTT…APII, PIIH…TPIK, EKDV…TPEF, QETL…SPLF, EKVA…SKSF, KSFP…SPVF, LQDS…SPAF, IPSS…TPYF, PDFA…APLT, SEPI…KPQF, PEKV…SPIP, DEPF…GPEF, SQPH…SPYF, TNPL…PPVF, LFSQ…PPVF, TQAV…TQSF, TQSF…SPVF, VGLP…MPVF, DKPF…PPVF, DQPT…PPVF, NQLI…SPAF, SQST…APQF, MTLE…LPSF, TQSQ…KPVF, ETSS…APVF, AHEV…SPVC, DQVA…PPVF, SSNH…PPVF, ERRD…PPRF, SQDV…SPVF, TPAN…KPTA, and IPLE…TIRF. Residue Asn-48 is glycosylated (N-linked (GlcNAc...) asparagine). Asn-341 carries N-linked (GlcNAc...) asparagine glycosylation. N-linked (GlcNAc...) asparagine glycans are attached at residues Asn-481, Asn-562, Asn-667, Asn-799, Asn-879, Asn-898, and Asn-1006. 2 N-linked (GlcNAc...) asparagine glycosylation sites follow: Asn-1367 and Asn-1429. Asn-1751 carries an N-linked (GlcNAc...) asparagine glycan. N-linked (GlcNAc...) asparagine glycosylation is found at Asn-1944, Asn-1993, and Asn-1996. Residues Asn-2208, Asn-2292, Asn-2331, and Asn-2467 are each glycosylated (N-linked (GlcNAc...) asparagine). An N-linked (GlcNAc...) asparagine glycan is attached at Asn-2734. N-linked (GlcNAc...) asparagine glycosylation occurs at Asn-3000. An N-linked (GlcNAc...) asparagine glycan is attached at Asn-3201. Residues Asn-3449, Asn-3618, and Asn-3741 are each glycosylated (N-linked (GlcNAc...) asparagine). The region spanning 3794–3832 is the EGF-like 1 domain; the sequence is SNDPCVEKPCPEDMQCVGYEASRRPFLCQCPPGKLGECS. 3 cysteine pairs are disulfide-bonded: Cys-3798/Cys-3809, Cys-3803/Cys-3821, and Cys-3823/Cys-3831. The Laminin G-like domain occupies 3834-4017; that stretch reads HTSLSFAGNS…VGLTELKLGC (184 aa). Residue Asn-3926 is glycosylated (N-linked (GlcNAc...) asparagine). Disulfide bonds link Cys-3984-Cys-4017, Cys-4024-Cys-4035, Cys-4029-Cys-4045, Cys-4047-Cys-4056, Cys-4063-Cys-4074, Cys-4068-Cys-4083, Cys-4085-Cys-4094, Cys-4101-Cys-4112, Cys-4106-Cys-4121, and Cys-4123-Cys-4132. EGF-like domains are found at residues 4020 to 4057 and 4059 to 4095; these read YPDA…TNCE and EITA…VTCE. The region spanning 4097–4133 is the EGF-like 4; calcium-binding domain; that stretch reads DVDECEREECENGGSCVNLFGSFFCNCTPGYVGQYCG. A helical membrane pass occupies residues 4154-4174; that stretch reads LIGIAVVLFVIFTLIVLFIVF. Residues 4175–4555 are Cytoplasmic-facing; that stretch reads RKKVFRKNYS…FVETQHQTQV (381 aa). Positions 4326-4343 are enriched in polar residues; sequence SNKGSNSEVQSLNSFQSD. Disordered stretches follow at residues 4326–4347, 4395–4424, and 4452–4472; these read SNKG…SGDD, GGYD…LPED, and PRFH…TDLG. An omega-N-methylarginine mark is found at Arg-4508 and Arg-4518.

Restricted to the nervous system. Abundantly expressed in the fetal brain.

Its subcellular location is the membrane. May play a role in the interactions between neurites derived from specific subsets of neurons during development. The chain is Protocadherin Fat 3 (Fat3) from Rattus norvegicus (Rat).